Reading from the N-terminus, the 401-residue chain is Lipid-A-disaccharide synthase (401 aa).

This sequence belongs to the LpxB family.

It catalyses the reaction a lipid X + a UDP-2-N,3-O-bis[(3R)-3-hydroxyacyl]-alpha-D-glucosamine = a lipid A disaccharide + UDP + H(+). It functions in the pathway bacterial outer membrane biogenesis; LPS lipid A biosynthesis. In terms of biological role, condensation of UDP-2,3-diacylglucosamine and 2,3-diacylglucosamine-1-phosphate to form lipid A disaccharide, a precursor of lipid A, a phosphorylated glycolipid that anchors the lipopolysaccharide to the outer membrane of the cell. This chain is Lipid-A-disaccharide synthase, found in Ruegeria pomeroyi (strain ATCC 700808 / DSM 15171 / DSS-3) (Silicibacter pomeroyi).